The sequence spans 671 residues: Acetyl-coenzyme A synthetase 2 (671 aa).

CoA is bound by residues 207-210 (RGGR) and Thr-326. ATP is bound by residues 402-404 (GEP), 426-431 (DTYWQT), Asp-517, and Arg-532. Position 540 (Ser-540) interacts with CoA. Arg-543 contributes to the ATP binding site. Arg-603 serves as a coordination point for CoA.

This sequence belongs to the ATP-dependent AMP-binding enzyme family.

It catalyses the reaction acetate + ATP + CoA = acetyl-CoA + AMP + diphosphate. The chain is Acetyl-coenzyme A synthetase 2 (ACS2) from Candida albicans (strain SC5314 / ATCC MYA-2876) (Yeast).